The primary structure comprises 126 residues: Large-conductance mechanosensitive channel (126 aa).

The next 2 helical transmembrane spans lie at 8-28 and 70-90; these read FAMR…AAFT and IQQI…VKVI.

This sequence belongs to the MscL family. As to quaternary structure, homopentamer.

It is found in the cell membrane. In terms of biological role, channel that opens in response to stretch forces in the membrane lipid bilayer. May participate in the regulation of osmotic pressure changes within the cell. The sequence is that of Large-conductance mechanosensitive channel from Exiguobacterium sp. (strain ATCC BAA-1283 / AT1b).